Reading from the N-terminus, the 514-residue chain is 2,3-bisphosphoglycerate-independent phosphoglycerate mutase (514 aa).

Mn(2+) contacts are provided by Asp-14 and Ser-64. The active-site Phosphoserine intermediate is Ser-64. Residues His-125, 155–156 (RD), Arg-187, Arg-193, 263–266 (RADR), and Lys-336 each bind substrate. 5 residues coordinate Mn(2+): Asp-403, His-407, Asp-444, His-445, and His-463.

Belongs to the BPG-independent phosphoglycerate mutase family. In terms of assembly, monomer. The cofactor is Mn(2+).

The catalysed reaction is (2R)-2-phosphoglycerate = (2R)-3-phosphoglycerate. It functions in the pathway carbohydrate degradation; glycolysis; pyruvate from D-glyceraldehyde 3-phosphate: step 3/5. Its function is as follows. Catalyzes the interconversion of 2-phosphoglycerate and 3-phosphoglycerate. The protein is 2,3-bisphosphoglycerate-independent phosphoglycerate mutase of Enterobacter sp. (strain 638).